The sequence spans 238 residues: MEESINPIISIGPVIFNLTMLAMTLLIVGVIFVFIYWASRNMTLKPKGKQNVLEYVYDFVIGFTEPNIGSRYMKDYSLFFLCLFLFMVIANNLGLMTKLQTIDGTNWWSSPTANLQYDLTLSFLVILLTHIESVRRRGFKKSIKSFMSPVFVIPMNILEEFTNFLSLALRIFGNIFAGEVMTSLLLLLSHQAIYWYPVAFGANLAWTAFSVFISCIQAYVFTLLTSVYLGNKINIEEE.

5 helical membrane-spanning segments follow: residues 15–35 (IFNL…FVFI), 76–96 (YSLF…LGLM), 111–131 (PTAN…LTHI), 167–187 (LALR…LLLL), and 208–230 (AFSV…VYLG).

This sequence belongs to the ATPase A chain family. As to quaternary structure, F-type ATPases have 2 components, CF(1) - the catalytic core - and CF(0) - the membrane proton channel. CF(1) has five subunits: alpha(3), beta(3), gamma(1), delta(1), epsilon(1). CF(0) has three main subunits: a(1), b(2) and c(9-12). The alpha and beta chains form an alternating ring which encloses part of the gamma chain. CF(1) is attached to CF(0) by a central stalk formed by the gamma and epsilon chains, while a peripheral stalk is formed by the delta and b chains.

Its subcellular location is the cell membrane. Functionally, key component of the proton channel; it plays a direct role in the translocation of protons across the membrane. In Streptococcus pneumoniae (strain ATCC BAA-255 / R6), this protein is ATP synthase subunit a.